A 413-amino-acid chain; its full sequence is Histidine--tRNA ligase (413 aa).

Belongs to the class-II aminoacyl-tRNA synthetase family. In terms of assembly, homodimer.

The protein resides in the cytoplasm. It catalyses the reaction tRNA(His) + L-histidine + ATP = L-histidyl-tRNA(His) + AMP + diphosphate + H(+). In Geobacter metallireducens (strain ATCC 53774 / DSM 7210 / GS-15), this protein is Histidine--tRNA ligase.